A 273-amino-acid chain; its full sequence is 4-hydroxy-tetrahydrodipicolinate reductase (273 aa).

Residues 12–17 and glutamate 38 contribute to the NAD(+) site; that span reads GAGGRM. Residue arginine 39 coordinates NADP(+). NAD(+)-binding positions include 102-104 and 126-129; these read GTT and AANF. The Proton donor/acceptor role is filled by histidine 159. Histidine 160 is a (S)-2,3,4,5-tetrahydrodipicolinate binding site. Lysine 163 (proton donor) is an active-site residue. 169 to 170 contacts (S)-2,3,4,5-tetrahydrodipicolinate; sequence GT.

It belongs to the DapB family. In terms of assembly, homotetramer.

It is found in the cytoplasm. The enzyme catalyses (S)-2,3,4,5-tetrahydrodipicolinate + NAD(+) + H2O = (2S,4S)-4-hydroxy-2,3,4,5-tetrahydrodipicolinate + NADH + H(+). It catalyses the reaction (S)-2,3,4,5-tetrahydrodipicolinate + NADP(+) + H2O = (2S,4S)-4-hydroxy-2,3,4,5-tetrahydrodipicolinate + NADPH + H(+). The protein operates within amino-acid biosynthesis; L-lysine biosynthesis via DAP pathway; (S)-tetrahydrodipicolinate from L-aspartate: step 4/4. In terms of biological role, catalyzes the conversion of 4-hydroxy-tetrahydrodipicolinate (HTPA) to tetrahydrodipicolinate. This Salmonella enteritidis PT4 (strain P125109) protein is 4-hydroxy-tetrahydrodipicolinate reductase.